A 315-amino-acid polypeptide reads, in one-letter code: Methionyl-tRNA formyltransferase (315 aa).

Residue 113–116 coordinates (6S)-5,6,7,8-tetrahydrofolate; sequence SLLP.

The protein belongs to the Fmt family.

The catalysed reaction is L-methionyl-tRNA(fMet) + (6R)-10-formyltetrahydrofolate = N-formyl-L-methionyl-tRNA(fMet) + (6S)-5,6,7,8-tetrahydrofolate + H(+). Attaches a formyl group to the free amino group of methionyl-tRNA(fMet). The formyl group appears to play a dual role in the initiator identity of N-formylmethionyl-tRNA by promoting its recognition by IF2 and preventing the misappropriation of this tRNA by the elongation apparatus. The protein is Methionyl-tRNA formyltransferase of Klebsiella pneumoniae (strain 342).